Reading from the N-terminus, the 209-residue chain is COP9 signalosome complex subunit 8 (209 aa).

The 172-residue stretch at 8–179 (ESAFSFKKLL…GALDVSFNKF (172 aa)) folds into the PCI domain. At Ser175 the chain carries Phosphoserine.

Belongs to the CSN8 family. In terms of assembly, component of the CSN complex, composed of COPS1/GPS1, COPS2, COPS3, COPS4, COPS5, COPS6, COPS7 (COPS7A or COPS7B), COPS8 and COPS9 isoform 1. In the complex, it probably interacts directly with COPS3, COPS4 and COPS7 (COPS7A or COPS7B).

It localises to the cytoplasm. Its subcellular location is the nucleus. Component of the COP9 signalosome complex (CSN), a complex involved in various cellular and developmental processes. The CSN complex is an essential regulator of the ubiquitin (Ubl) conjugation pathway by mediating the deneddylation of the cullin subunits of SCF-type E3 ligase complexes, leading to decrease the Ubl ligase activity of SCF-type complexes such as SCF, CSA or DDB2. The complex is also involved in phosphorylation of p53/TP53, c-jun/JUN, IkappaBalpha/NFKBIA, ITPK1 and IRF8/ICSBP, possibly via its association with CK2 and PKD kinases. CSN-dependent phosphorylation of TP53 and JUN promotes and protects degradation by the Ubl system, respectively. In Homo sapiens (Human), this protein is COP9 signalosome complex subunit 8 (COPS8).